We begin with the raw amino-acid sequence, 338 residues long: MKVFYDNDADLALIQKKKVAIIGYGSQGHAHALNLKDSGVSVVVGLRKDSSSWEKAGKAGLEVKEVAAAVAAADVVMILTPDEGQGALYRDEIAPNIRQGAALVFAHGFNIHFGQIHPRADLDCFLVAPKGPGHLVRSTYTQGGGVPSLIAVHQDASGNATNIALSYAKANGGTRAGVIETSFREETETDLFGEQAVLCGGATALVQAGFETLVEAGYAPEMAYFECMHELKLIVDLMYEGGISNMRYSISNTAEYGDLTRGPRVVNADTKAEMKKILTEIQNGQFAREFILENQSGKPTMQAMRRIGAEHPIEVVGSKLRSMMTWIGQSRIVDRSRN.

The KARI N-terminal Rossmann domain maps to 1-181 (MKVFYDNDAD…GGTRAGVIET (181 aa)). NADP(+) is bound by residues 24 to 27 (YGSQ), R47, S50, S52, and 82 to 85 (DEGQ). Residue H107 is part of the active site. G133 lines the NADP(+) pocket. The KARI C-terminal knotted domain occupies 182–327 (SFREETETDL…SKLRSMMTWI (146 aa)). Mg(2+) contacts are provided by D190, E194, E226, and E230. S251 lines the substrate pocket.

This sequence belongs to the ketol-acid reductoisomerase family. It depends on Mg(2+) as a cofactor.

The catalysed reaction is (2R)-2,3-dihydroxy-3-methylbutanoate + NADP(+) = (2S)-2-acetolactate + NADPH + H(+). It catalyses the reaction (2R,3R)-2,3-dihydroxy-3-methylpentanoate + NADP(+) = (S)-2-ethyl-2-hydroxy-3-oxobutanoate + NADPH + H(+). Its pathway is amino-acid biosynthesis; L-isoleucine biosynthesis; L-isoleucine from 2-oxobutanoate: step 2/4. It functions in the pathway amino-acid biosynthesis; L-valine biosynthesis; L-valine from pyruvate: step 2/4. Involved in the biosynthesis of branched-chain amino acids (BCAA). Catalyzes an alkyl-migration followed by a ketol-acid reduction of (S)-2-acetolactate (S2AL) to yield (R)-2,3-dihydroxy-isovalerate. In the isomerase reaction, S2AL is rearranged via a Mg-dependent methyl migration to produce 3-hydroxy-3-methyl-2-ketobutyrate (HMKB). In the reductase reaction, this 2-ketoacid undergoes a metal-dependent reduction by NADPH to yield (R)-2,3-dihydroxy-isovalerate. This is Ketol-acid reductoisomerase (NADP(+)) from Acidithiobacillus ferrooxidans (strain ATCC 23270 / DSM 14882 / CIP 104768 / NCIMB 8455) (Ferrobacillus ferrooxidans (strain ATCC 23270)).